A 312-amino-acid chain; its full sequence is MDGDNQSENSQFLLLGISESPEQQQILFWMFLSMYLVTVLGNVLIILAISSDSHLHTPMYFFLANLSFTDLFFVTNTIPKMLVNFQSQNKAISYAGCLTQLYFLVSLVTLDNLILAVMAYDRYVAICCPLHYVTAMSPGLCVLLLSLCWGLSVLYGLLLTLLLTRVTFCGPREIHYLFCDMYILLRLACSNTHIIHTVLVATGCFIFLTPLGFMTTSYVCIVRTILQIPSASKKYKAFSTCASHLGVVSLFYGTLAMVYLQPLHTYSMKDSVATVMYAVVTPMMNPFIYSLRNKDMHGALGRVLRRLFQRPK.

Over 1 to 25 the chain is Extracellular; that stretch reads MDGDNQSENSQFLLLGISESPEQQQ. An N-linked (GlcNAc...) asparagine glycan is attached at Asn5. Residues 26 to 49 traverse the membrane as a helical segment; that stretch reads ILFWMFLSMYLVTVLGNVLIILAI. At 50 to 57 the chain is on the cytoplasmic side; that stretch reads SSDSHLHT. Residues 58–79 traverse the membrane as a helical segment; the sequence is PMYFFLANLSFTDLFFVTNTIP. Over 80–100 the chain is Extracellular; it reads KMLVNFQSQNKAISYAGCLTQ. An intrachain disulfide couples Cys97 to Cys189. The chain crosses the membrane as a helical span at residues 101–120; sequence LYFLVSLVTLDNLILAVMAY. Over 121–140 the chain is Cytoplasmic; that stretch reads DRYVAICCPLHYVTAMSPGL. Residues 141-158 form a helical membrane-spanning segment; the sequence is CVLLLSLCWGLSVLYGLL. At 159-196 the chain is on the extracellular side; sequence LTLLLTRVTFCGPREIHYLFCDMYILLRLACSNTHIIH. Residues 197-220 traverse the membrane as a helical segment; the sequence is TVLVATGCFIFLTPLGFMTTSYVC. The Cytoplasmic segment spans residues 221-237; the sequence is IVRTILQIPSASKKYKA. Residues 238-260 form a helical membrane-spanning segment; that stretch reads FSTCASHLGVVSLFYGTLAMVYL. Residues 261 to 271 are Extracellular-facing; sequence QPLHTYSMKDS. A helical membrane pass occupies residues 272 to 291; the sequence is VATVMYAVVTPMMNPFIYSL. Over 292–312 the chain is Cytoplasmic; it reads RNKDMHGALGRVLRRLFQRPK.

The protein belongs to the G-protein coupled receptor 1 family.

The protein localises to the cell membrane. Functionally, odorant receptor. This is Olfactory receptor 1D5 (OR1D5) from Pan paniscus (Pygmy chimpanzee).